Consider the following 357-residue polypeptide: Histidine biosynthesis bifunctional protein HisB (357 aa).

The tract at residues 1 to 168 (MTPILFIDRD…GIAHALADAP (168 aa)) is histidinol-phosphatase. The active-site Nucleophile is the Asp-8. Mg(2+)-binding residues include Asp-8, Asp-10, and Asp-128. Residue Asp-10 is the Proton donor of the active site. The interval 169-357 (RTAVVQRDTK…TALPSTKGAL (189 aa)) is imidazoleglycerol-phosphate dehydratase.

It in the N-terminal section; belongs to the histidinol-phosphatase family. The protein in the C-terminal section; belongs to the imidazoleglycerol-phosphate dehydratase family. Requires Mg(2+) as cofactor.

It is found in the cytoplasm. It catalyses the reaction D-erythro-1-(imidazol-4-yl)glycerol 3-phosphate = 3-(imidazol-4-yl)-2-oxopropyl phosphate + H2O. It carries out the reaction L-histidinol phosphate + H2O = L-histidinol + phosphate. It participates in amino-acid biosynthesis; L-histidine biosynthesis; L-histidine from 5-phospho-alpha-D-ribose 1-diphosphate: step 6/9. It functions in the pathway amino-acid biosynthesis; L-histidine biosynthesis; L-histidine from 5-phospho-alpha-D-ribose 1-diphosphate: step 8/9. In Stenotrophomonas maltophilia (strain K279a), this protein is Histidine biosynthesis bifunctional protein HisB.